The sequence spans 383 residues: Phospho-N-acetylmuramoyl-pentapeptide-transferase (383 aa).

A run of 9 helical transmembrane segments spans residues 26–46 (TAGA…GVIE), 73–93 (TMGG…WAEL), 98–118 (IILL…DDFL), 131–151 (IYKI…LYYF), 182–202 (IFLP…IPFA), 221–241 (GLAI…SYVS), 258–278 (AGEV…FLWF), 283–305 (AQVF…IALF), and 360–380 (QVVF…IATL).

Belongs to the glycosyltransferase 4 family. MraY subfamily. Mg(2+) is required as a cofactor.

The protein localises to the cell inner membrane. The enzyme catalyses UDP-N-acetyl-alpha-D-muramoyl-L-alanyl-gamma-D-glutamyl-meso-2,6-diaminopimeloyl-D-alanyl-D-alanine + di-trans,octa-cis-undecaprenyl phosphate = di-trans,octa-cis-undecaprenyl diphospho-N-acetyl-alpha-D-muramoyl-L-alanyl-D-glutamyl-meso-2,6-diaminopimeloyl-D-alanyl-D-alanine + UMP. Its pathway is cell wall biogenesis; peptidoglycan biosynthesis. In terms of biological role, catalyzes the initial step of the lipid cycle reactions in the biosynthesis of the cell wall peptidoglycan: transfers peptidoglycan precursor phospho-MurNAc-pentapeptide from UDP-MurNAc-pentapeptide onto the lipid carrier undecaprenyl phosphate, yielding undecaprenyl-pyrophosphoryl-MurNAc-pentapeptide, known as lipid I. The chain is Phospho-N-acetylmuramoyl-pentapeptide-transferase from Brachyspira hyodysenteriae (strain ATCC 49526 / WA1).